Reading from the N-terminus, the 204-residue chain is Tat proofreading chaperone DmsD (204 aa).

Belongs to the TorD/DmsD family. DmsD subfamily.

Functionally, required for biogenesis/assembly of DMSO reductase, but not for the interaction of the DmsA signal peptide with the Tat system. May be part of a chaperone cascade complex that facilitates a folding-maturation pathway for the substrate protein. This Salmonella paratyphi A (strain ATCC 9150 / SARB42) protein is Tat proofreading chaperone DmsD.